We begin with the raw amino-acid sequence, 359 residues long: MKKYLALALIAPLLISCSTTKKGDTYNEAWVKDTNGFDILMGQFAHNIENIWGFKEVVIAGPKDYVKYTDQYQTRSHINFDDGTITIETIAGTEPAAHLRRAIIKTLLMGDDPSSVDLYSDVDDITISKEPFLYGQVVDNTGQPIRWEGRASNFADYLLKNRLKSRSNGMRIIYSVTINMVPNHLDKRAHKYLGMVRQASRKYGVDESLILAIMQTESSFNPYAVSRSDALGLMQVVQHTAGKDVFRSQGKSGTPSRSFLFDPASNIDTGTAYLAMLNNVYLGGIDNPTSRRYAVITAYNGGAGSVLRVFSNDKIQAANIINTMTPGDVYQTLTTRHPSAESRRYLYKVNTAQKSYRRR.

The signal sequence occupies residues 1 to 16; the sequence is MKKYLALALIAPLLIS. The N-palmitoyl cysteine moiety is linked to residue Cys-17. The S-diacylglycerol cysteine moiety is linked to residue Cys-17.

Belongs to the transglycosylase Slt family.

The protein localises to the cell outer membrane. It catalyses the reaction Exolytic cleavage of the (1-&gt;4)-beta-glycosidic linkage between N-acetylmuramic acid (MurNAc) and N-acetylglucosamine (GlcNAc) residues in peptidoglycan, from either the reducing or the non-reducing ends of the peptidoglycan chains, with concomitant formation of a 1,6-anhydrobond in the MurNAc residue.. In terms of biological role, murein-degrading enzyme. May play a role in recycling of muropeptides during cell elongation and/or cell division. This is Membrane-bound lytic murein transglycosylase C from Escherichia coli O81 (strain ED1a).